The chain runs to 85 residues: Sec-independent protein translocase protein TatA (85 aa).

Residues 1–21 (MGSMSIWHWLVVGVLVLLLFG) traverse the membrane as a helical segment. The tract at residues 39 to 85 (FKKGMSEEDEPTQPAEPRPTPRLQQQPPIEPNADPKLQPMQDDRPQH) is disordered.

It belongs to the TatA/E family. The Tat system comprises two distinct complexes: a TatABC complex, containing multiple copies of TatA, TatB and TatC subunits, and a separate TatA complex, containing only TatA subunits. Substrates initially bind to the TatABC complex, which probably triggers association of the separate TatA complex to form the active translocon.

It is found in the cell inner membrane. In terms of biological role, part of the twin-arginine translocation (Tat) system that transports large folded proteins containing a characteristic twin-arginine motif in their signal peptide across membranes. TatA could form the protein-conducting channel of the Tat system. The polypeptide is Sec-independent protein translocase protein TatA (Rhizorhabdus wittichii (strain DSM 6014 / CCUG 31198 / JCM 15750 / NBRC 105917 / EY 4224 / RW1) (Sphingomonas wittichii)).